Here is a 306-residue protein sequence, read N- to C-terminus: Epoxyqueuosine reductase (306 aa).

D131 acts as the Proton donor in catalysis. The 33-residue stretch at 173–205 folds into the 4Fe-4S ferredoxin-type domain; that stretch reads LDLTYDHPVTDHCGTCTACIDACPTQAIVQPYV. [4Fe-4S] cluster is bound by residues C185, C188, C191, C195, C211, C238, C241, and C245.

Belongs to the QueG family. As to quaternary structure, monomer. The cofactor is cob(II)alamin. [4Fe-4S] cluster is required as a cofactor.

It localises to the cytoplasm. The catalysed reaction is epoxyqueuosine(34) in tRNA + AH2 = queuosine(34) in tRNA + A + H2O. It functions in the pathway tRNA modification; tRNA-queuosine biosynthesis. In terms of biological role, catalyzes the conversion of epoxyqueuosine (oQ) to queuosine (Q), which is a hypermodified base found in the wobble positions of tRNA(Asp), tRNA(Asn), tRNA(His) and tRNA(Tyr). The sequence is that of Epoxyqueuosine reductase from Cellulophaga algicola (strain DSM 14237 / IC166 / ACAM 630).